The following is a 406-amino-acid chain: MRGGLWQLGQSITRRLAQADKKTIGRRCFASDADLKKTVLYDFHVVNGGKMVPFAGWSMPIQYKDSIMDSTVNCRENGSLFDVSHMCGLSLKGKDTIPFLEKLVIADVAGLAPGTGSLTVFTNEKGGAIDDSVVTKVTNDHIYLVVNAGCRDKDLAHIEEHMKSFKSKGGDVSWHIHDERSLLALQGPLAAPVLQYLTKDDLSKMYFGEFRVLDINGAPCFLTRTGYTGEDGFEISVPSENALDLAKALLEKSEGKIRLTGLGARDSLRLEAGLCLYGNDMEQHTTPVEAGLTWAIGKRRRAEGGFLGAEVILKQIEEGPKIRRVGFFSSGPPPRSHSEIQDSNGQNIGEITSGGFSPCLKKNIAMGYVKTGNHKAGTNVKIVIRGKSYDGVVTKMPFVPTKYYKP.

The N-terminal 29 residues, 1–29 (MRGGLWQLGQSITRRLAQADKKTIGRRCF), are a transit peptide targeting the mitochondrion. Glutamate 234, arginine 265, and tyrosine 403 together coordinate substrate.

The protein belongs to the GcvT family. The glycine cleavage system is composed of four proteins: P, T, L and H.

Its subcellular location is the mitochondrion. The enzyme catalyses N(6)-[(R)-S(8)-aminomethyldihydrolipoyl]-L-lysyl-[protein] + (6S)-5,6,7,8-tetrahydrofolate = N(6)-[(R)-dihydrolipoyl]-L-lysyl-[protein] + (6R)-5,10-methylene-5,6,7,8-tetrahydrofolate + NH4(+). In terms of biological role, the glycine cleavage system catalyzes the degradation of glycine. The polypeptide is Aminomethyltransferase, mitochondrial (GDCST) (Solanum tuberosum (Potato)).